Reading from the N-terminus, the 421-residue chain is ATP-dependent RNA helicase RhlB (421 aa).

The short motif at 9-37 (QKFSDFALHAKVIEALENKGFHYCTPIQA) is the Q motif element. The Helicase ATP-binding domain maps to 40-219 (LPLTLAGRDV…FEQMNNAEYV (180 aa)). Residue 53-60 (AQTGTGKT) coordinates ATP. The DEAD box motif lies at 165 to 168 (DEAD). Positions 245 to 390 (RLLQTLIEEE…QSKYNPDALL (146 aa)) constitute a Helicase C-terminal domain. A disordered region spans residues 386–421 (PDALLSELPPPKRLTRARSGNGPRRTGAPRNRRRPG). Low complexity predominate over residues 405–414 (GNGPRRTGAP).

Belongs to the DEAD box helicase family. RhlB subfamily. Component of the RNA degradosome, which is a multiprotein complex involved in RNA processing and mRNA degradation.

The protein localises to the cytoplasm. It catalyses the reaction ATP + H2O = ADP + phosphate + H(+). Its function is as follows. DEAD-box RNA helicase involved in RNA degradation. Has RNA-dependent ATPase activity and unwinds double-stranded RNA. The protein is ATP-dependent RNA helicase RhlB of Enterobacter sp. (strain 638).